The chain runs to 340 residues: MTENALLLLNLGSPDSTRVEDVRRYLDQFLMDPYVVDLPWPLRRLLVSLILIKRPAESAHAYSSIWWDEGSPLIVLSRRLQEAMKPHWPHGPVELAMRYGQPAIEKVLLDLARRGIRRVTLAPLYPQFADSTTTTAEQEVRRVIAAHRLELEVSTLPPFYDQPVYLDALVESVRPYLQQPHDHLLLSFHGLPERHIRKLVKDPAHDLLAENSRNVSPEALALCYRSQCLRTAEAFAERAGLEQGRWSVSFQSRLGRAKWIEPYTDAKLDELVQRGVKRLLVMCPAFVADCIETLEEIGMRGREQFISAGGEDLVLIPCLNDHPAWVGALGEMSGRLARPL.

Residues H189 and E292 each contribute to the Fe cation site.

The protein belongs to the ferrochelatase family.

Its subcellular location is the cytoplasm. It catalyses the reaction heme b + 2 H(+) = protoporphyrin IX + Fe(2+). It participates in porphyrin-containing compound metabolism; protoheme biosynthesis; protoheme from protoporphyrin-IX: step 1/1. Functionally, catalyzes the ferrous insertion into protoporphyrin IX. The chain is Ferrochelatase from Pseudomonas aeruginosa (strain UCBPP-PA14).